The sequence spans 1413 residues: DNA-directed RNA polymerase subunit beta' (1413 aa).

Cys70, Cys72, Cys85, and Cys88 together coordinate Zn(2+). Positions 460, 462, and 464 each coordinate Mg(2+). Cys819, Cys893, Cys900, and Cys903 together coordinate Zn(2+). The disordered stretch occupies residues 1392-1413 (EEAFDFGTPSAPAEEPQHPAAE).

It belongs to the RNA polymerase beta' chain family. The RNAP catalytic core consists of 2 alpha, 1 beta, 1 beta' and 1 omega subunit. When a sigma factor is associated with the core the holoenzyme is formed, which can initiate transcription. The cofactor is Mg(2+). Zn(2+) serves as cofactor.

The catalysed reaction is RNA(n) + a ribonucleoside 5'-triphosphate = RNA(n+1) + diphosphate. In terms of biological role, DNA-dependent RNA polymerase catalyzes the transcription of DNA into RNA using the four ribonucleoside triphosphates as substrates. This is DNA-directed RNA polymerase subunit beta' from Burkholderia cenocepacia (strain ATCC BAA-245 / DSM 16553 / LMG 16656 / NCTC 13227 / J2315 / CF5610) (Burkholderia cepacia (strain J2315)).